The sequence spans 398 residues: Acetate kinase 1 (398 aa).

Residue Asn10 coordinates Mg(2+). Lys17 is an ATP binding site. Residue Arg89 coordinates substrate. Asp146 functions as the Proton donor/acceptor in the catalytic mechanism. Residues 206–210 (HLGNG), 281–283 (DCR), and 329–333 (GIGEN) contribute to the ATP site. Glu384 is a binding site for Mg(2+).

The protein belongs to the acetokinase family. In terms of assembly, homodimer. Mg(2+) serves as cofactor. It depends on Mn(2+) as a cofactor.

The protein resides in the cytoplasm. It carries out the reaction acetate + ATP = acetyl phosphate + ADP. Its pathway is metabolic intermediate biosynthesis; acetyl-CoA biosynthesis; acetyl-CoA from acetate: step 1/2. Catalyzes the formation of acetyl phosphate from acetate and ATP. Can also catalyze the reverse reaction. This chain is Acetate kinase 1, found in Neisseria meningitidis serogroup B (strain ATCC BAA-335 / MC58).